Consider the following 621-residue polypeptide: Polycystin-2-like protein 2 (621 aa).

The Cytoplasmic portion of the chain corresponds to 1-31 (MSEATWWYRGGTSKHDLHYRREAEVNTTLEE). A helical transmembrane segment spans residues 32–52 (LLLYFIFLINLCILTFGMVNP). Residues 53 to 277 (HMYYLNKVMS…SVKLLRYVSY (225 aa)) lie on the Extracellular side of the membrane. N-linked (GlcNAc...) asparagine glycans are attached at residues N115 and N138. A helical transmembrane segment spans residues 278–298 (YDYFIASCEVIFCIFLFVFII). Topologically, residues 299 to 314 (QELRKVNEFKSAYFRS) are cytoplasmic. Residues 315-335 (VWNWLEMLLLLLCFLAVSFYA) form a helical membrane-spanning segment. Over 336–360 (YCNMQSFLLLGQLLKNTDSYPDFYF) the chain is Extracellular. A helical membrane pass occupies residues 361-381 (LAYWHIYYNNVIAITIFFAWI). At 382–406 (KIFKFISFNETMSQLSSTLSRCMKD) the chain is on the cytoplasmic side. Residues 407-427 (IVGFAIMFFIIFSAYAQLGFL) form a helical membrane-spanning segment. The Extracellular segment spans residues 428 to 468 (VFGSQVDDFSTFQNSIFAQFRIVLGDFNFAGIQQANWILGP). A helical membrane pass occupies residues 469–489 (IYFITFIFFVFFVLLNMFLAI). The Cytoplasmic portion of the chain corresponds to 490-621 (INDTYSEVKA…KLNQLMRKLH (132 aa)). Residues 521–551 (NVLEKLRLKKAQAKEEKKMQTTDLAQRARRD) are a coiled coil.

It belongs to the polycystin family. As to quaternary structure, interacts with TRPC1 and TRPC5. Expressed only in testis and heart.

The protein localises to the membrane. In terms of biological role, exhibits a lower single conductance but no spontaneous channel activity. May function as a regulator of calcium channels or a channel component involving Ca2(+) homeostasis. This Mus musculus (Mouse) protein is Polycystin-2-like protein 2.